The chain runs to 1372 residues: DNA-directed RNA polymerase subunit beta (1372 aa).

Belongs to the RNA polymerase beta chain family. In terms of assembly, the RNAP catalytic core consists of 2 alpha, 1 beta, 1 beta' and 1 omega subunit. When a sigma factor is associated with the core the holoenzyme is formed, which can initiate transcription.

The catalysed reaction is RNA(n) + a ribonucleoside 5'-triphosphate = RNA(n+1) + diphosphate. DNA-dependent RNA polymerase catalyzes the transcription of DNA into RNA using the four ribonucleoside triphosphates as substrates. This is DNA-directed RNA polymerase subunit beta from Nitratidesulfovibrio vulgaris (strain DP4) (Desulfovibrio vulgaris).